The sequence spans 361 residues: Sensor protein VanSC (361 aa).

Transmembrane regions (helical) follow at residues 16 to 36 (FVTT…IRFI) and 59 to 79 (WLFC…IYYM). A Histidine kinase domain is found at 144 to 359 (YLAHDLRTPL…IFNVRLPKPA (216 aa)). A Phosphohistidine; by autocatalysis modification is found at His147. A Mg(2+)-binding site is contributed by Glu252.

Autophosphorylated.

Its subcellular location is the membrane. The enzyme catalyses ATP + protein L-histidine = ADP + protein N-phospho-L-histidine.. This is Sensor protein VanSC from Enterococcus gallinarum.